Consider the following 208-residue polypeptide: Protein-L-isoaspartate O-methyltransferase (208 aa).

The active site involves Ser-59.

It belongs to the methyltransferase superfamily. L-isoaspartyl/D-aspartyl protein methyltransferase family.

It is found in the cytoplasm. It catalyses the reaction [protein]-L-isoaspartate + S-adenosyl-L-methionine = [protein]-L-isoaspartate alpha-methyl ester + S-adenosyl-L-homocysteine. In terms of biological role, catalyzes the methyl esterification of L-isoaspartyl residues in peptides and proteins that result from spontaneous decomposition of normal L-aspartyl and L-asparaginyl residues. It plays a role in the repair and/or degradation of damaged proteins. This chain is Protein-L-isoaspartate O-methyltransferase, found in Serratia proteamaculans (strain 568).